The following is a 102-amino-acid chain: Putative pterin-4-alpha-carbinolamine dehydratase (102 aa).

Belongs to the pterin-4-alpha-carbinolamine dehydratase family.

The enzyme catalyses (4aS,6R)-4a-hydroxy-L-erythro-5,6,7,8-tetrahydrobiopterin = (6R)-L-erythro-6,7-dihydrobiopterin + H2O. This is Putative pterin-4-alpha-carbinolamine dehydratase from Psychromonas ingrahamii (strain DSM 17664 / CCUG 51855 / 37).